The following is a 217-amino-acid chain: MIRNLIFLGAPGSGKGSTALEISTKYDIEHISTGEIFRNEIKNKTPLGLKVAEIVNDGKYVPDELTNQIVLKKLKELKQENKKFILDGYPRTLNQAMFLSSVLDEKILAVLLEVPTNLIIERLSFRRICPICKSIYHLKYNPSKKGEFCENHLENLTKIEARQDDSEESIKKRLKIYNEETKPMIDYYKKNQSLVVINSEESVKKVASLVIKKVFND.

ATP is bound at residue 12-17 (GSGKGS). Residues 32–61 (STGEIFRNEIKNKTPLGLKVAEIVNDGKYV) form an NMP region. Residues T33, R38, 59–61 (KYV), 88–91 (GYPR), and Q95 contribute to the AMP site. An LID region spans residues 125-165 (FRRICPICKSIYHLKYNPSKKGEFCENHLENLTKIEARQDD). Residues R126 and 135–136 (IY) contribute to the ATP site. AMP contacts are provided by R162 and R173. Residue E201 participates in ATP binding.

It belongs to the adenylate kinase family. Monomer.

The protein resides in the cytoplasm. It catalyses the reaction AMP + ATP = 2 ADP. Its pathway is purine metabolism; AMP biosynthesis via salvage pathway; AMP from ADP: step 1/1. Its function is as follows. Catalyzes the reversible transfer of the terminal phosphate group between ATP and AMP. Plays an important role in cellular energy homeostasis and in adenine nucleotide metabolism. In Mycoplasma mobile (strain ATCC 43663 / 163K / NCTC 11711) (Mesomycoplasma mobile), this protein is Adenylate kinase.